The chain runs to 544 residues: Light-independent protochlorophyllide reductase subunit B (544 aa).

Aspartate 36 contributes to the [4Fe-4S] cluster binding site. The active-site Proton donor is aspartate 286. 421–422 (GM) is a substrate binding site.

This sequence belongs to the ChlB/BchB/BchZ family. In terms of assembly, protochlorophyllide reductase is composed of three subunits; BchL, BchN and BchB. Forms a heterotetramer of two BchB and two BchN subunits. [4Fe-4S] cluster serves as cofactor.

It carries out the reaction chlorophyllide a + oxidized 2[4Fe-4S]-[ferredoxin] + 2 ADP + 2 phosphate = protochlorophyllide a + reduced 2[4Fe-4S]-[ferredoxin] + 2 ATP + 2 H2O. It participates in porphyrin-containing compound metabolism; bacteriochlorophyll biosynthesis (light-independent). Its function is as follows. Component of the dark-operative protochlorophyllide reductase (DPOR) that uses Mg-ATP and reduced ferredoxin to reduce ring D of protochlorophyllide (Pchlide) to form chlorophyllide a (Chlide). This reaction is light-independent. The NB-protein (BchN-BchB) is the catalytic component of the complex. In Chloroflexus aggregans (strain MD-66 / DSM 9485), this protein is Light-independent protochlorophyllide reductase subunit B.